The following is a 294-amino-acid chain: Indole-3-glycerol phosphate synthase (294 aa).

The protein belongs to the TrpC family.

It catalyses the reaction 1-(2-carboxyphenylamino)-1-deoxy-D-ribulose 5-phosphate + H(+) = (1S,2R)-1-C-(indol-3-yl)glycerol 3-phosphate + CO2 + H2O. It functions in the pathway amino-acid biosynthesis; L-tryptophan biosynthesis; L-tryptophan from chorismate: step 4/5. This chain is Indole-3-glycerol phosphate synthase, found in Parasynechococcus marenigrum (strain WH8102).